The chain runs to 338 residues: Inositol 2-dehydrogenase 3 (338 aa).

This sequence belongs to the Gfo/Idh/MocA family. In terms of assembly, homotetramer.

The enzyme catalyses myo-inositol + NAD(+) = scyllo-inosose + NADH + H(+). In terms of biological role, involved in the oxidation of myo-inositol (MI) to 2-keto-myo-inositol (2KMI or 2-inosose). The chain is Inositol 2-dehydrogenase 3 from Saccharopolyspora erythraea (strain ATCC 11635 / DSM 40517 / JCM 4748 / NBRC 13426 / NCIMB 8594 / NRRL 2338).